The chain runs to 421 residues: Membrane-associated protein UidC (421 aa).

Residues 1–23 (MRKIVAMAVICLTAASGLTSAYA) form the signal peptide.

Belongs to the outer membrane porin (Opr) (TC 1.B.25) family.

It localises to the cell outer membrane. Enhances the activity of the UidB (GusB) glucuronide transporter, on its own however it has no transport activity. Glucuronide transport does not occur in strain K12 due to a variant at position 100 of the UidB (GusB, AC P0CE44, AC P0CE45) protein. This is Membrane-associated protein UidC (uidC) from Escherichia coli (strain K12).